We begin with the raw amino-acid sequence, 209 residues long: Large ribosomal subunit protein uL4 (209 aa).

Residues 45-77 form a disordered region; sequence RQGTHKAKERAEVTGSTRKIKKQKGTGTARAGS.

It belongs to the universal ribosomal protein uL4 family. As to quaternary structure, part of the 50S ribosomal subunit.

One of the primary rRNA binding proteins, this protein initially binds near the 5'-end of the 23S rRNA. It is important during the early stages of 50S assembly. It makes multiple contacts with different domains of the 23S rRNA in the assembled 50S subunit and ribosome. Functionally, forms part of the polypeptide exit tunnel. The chain is Large ribosomal subunit protein uL4 from Flavobacterium johnsoniae (strain ATCC 17061 / DSM 2064 / JCM 8514 / BCRC 14874 / CCUG 350202 / NBRC 14942 / NCIMB 11054 / UW101) (Cytophaga johnsonae).